The sequence spans 570 residues: Formate--tetrahydrofolate ligase (570 aa).

Thr-65–Thr-72 serves as a coordination point for ATP.

Belongs to the formate--tetrahydrofolate ligase family.

The catalysed reaction is (6S)-5,6,7,8-tetrahydrofolate + formate + ATP = (6R)-10-formyltetrahydrofolate + ADP + phosphate. It functions in the pathway one-carbon metabolism; tetrahydrofolate interconversion. The protein is Formate--tetrahydrofolate ligase of Shewanella piezotolerans (strain WP3 / JCM 13877).